The primary structure comprises 111 residues: UPF0060 membrane protein XCC2880 (111 aa).

Transmembrane regions (helical) follow at residues 8-28 (LLLF…PYLW), 34-54 (SVWL…LLTL), 62-82 (VYAA…WWVD), and 91-111 (LLGA…PRSG).

It belongs to the UPF0060 family.

It localises to the cell inner membrane. The chain is UPF0060 membrane protein XCC2880 from Xanthomonas campestris pv. campestris (strain ATCC 33913 / DSM 3586 / NCPPB 528 / LMG 568 / P 25).